A 118-amino-acid chain; its full sequence is Large ribosomal subunit protein bL20 (118 aa).

The protein belongs to the bacterial ribosomal protein bL20 family.

Its function is as follows. Binds directly to 23S ribosomal RNA and is necessary for the in vitro assembly process of the 50S ribosomal subunit. It is not involved in the protein synthesizing functions of that subunit. This Pectobacterium atrosepticum (strain SCRI 1043 / ATCC BAA-672) (Erwinia carotovora subsp. atroseptica) protein is Large ribosomal subunit protein bL20.